The sequence spans 93 residues: DNA-directed RNA polymerase subunit omega (93 aa).

This sequence belongs to the RNA polymerase subunit omega family. As to quaternary structure, the RNAP catalytic core consists of 2 alpha, 1 beta, 1 beta' and 1 omega subunit. When a sigma factor is associated with the core the holoenzyme is formed, which can initiate transcription.

It carries out the reaction RNA(n) + a ribonucleoside 5'-triphosphate = RNA(n+1) + diphosphate. Promotes RNA polymerase assembly. Latches the N- and C-terminal regions of the beta' subunit thereby facilitating its interaction with the beta and alpha subunits. In Shewanella piezotolerans (strain WP3 / JCM 13877), this protein is DNA-directed RNA polymerase subunit omega.